A 1048-amino-acid chain; its full sequence is Selenate reductase subunit A (1048 aa).

A signal peptide (tat-type signal) is located at residues 1 to 39 (MENQHQKFISRRNFIKTSALLGGTAFLGTGLPNIKKTYS). Positions 56–129 (ENILYSACLQ…AGIQHAYDPY (74 aa)) constitute a 4Fe-4S Mo/W bis-MGD-type domain. Residues Cys-63, Cys-66, Cys-70, and Cys-115 each contribute to the [4Fe-4S] cluster site. Cys-270 is a Mo-bis(molybdopterin guanine dinucleotide) binding site.

This sequence belongs to the prokaryotic molybdopterin-containing oxidoreductase family. The complex is composed of three subunits: SrdA, SrdB and SrdC. Requires [4Fe-4S] cluster as cofactor. It depends on Mo-bis(molybdopterin guanine dinucleotide) as a cofactor. Predicted to be exported by the Tat system. The position of the signal peptide cleavage has not been experimentally proven.

It is found in the secreted. The catalysed reaction is selenite + a quinone + H2O = selenate + a quinol. Its function is as follows. Component of the respiratory selenate reductase complex, which catalyzes the reduction of selenate to selenite. SrdA is probably the catalytic subunit that reduces selenate. The sequence is that of Selenate reductase subunit A from Mesobacillus selenatarsenatis (strain DSM 18680 / JCM 14380 / FERM P-15431 / SF-1).